The chain runs to 480 residues: uncharacterized protein (480 aa).

Positions methionine 1 to histidine 20 are disordered.

This is an uncharacterized protein from Arabidopsis thaliana (Mouse-ear cress).